An 88-amino-acid chain; its full sequence is Small ribosomal subunit protein bS16 (88 aa).

The protein belongs to the bacterial ribosomal protein bS16 family.

The chain is Small ribosomal subunit protein bS16 from Mesomycoplasma hyopneumoniae (strain 232) (Mycoplasma hyopneumoniae).